The chain runs to 336 residues: tRNA (guanine(10)-N2)-dimethyltransferase (336 aa).

One can recognise a THUMP domain in the interval 50-147 (KILKKRLAYA…NDRFILTRRL (98 aa)).

It belongs to the methyltransferase superfamily. Trm-G10 family. Monomer.

It is found in the cytoplasm. The enzyme catalyses guanosine(10) in tRNA + 2 S-adenosyl-L-methionine = N(2)-dimethylguanosine(10) in tRNA + 2 S-adenosyl-L-homocysteine + 2 H(+). Its function is as follows. Catalyzes the adenosylmethionine-dependent methylation of the exocyclic amino group (N(2)) of guanosine at position 10 of various tRNAs. Acts via a two-step process that leads to the formation of either N(2)-monomethyl (m(2)G) or N(2)-dimethylguanosine (m(2)(2)G). The chain is tRNA (guanine(10)-N2)-dimethyltransferase (trmG10) from Methanothermobacter thermautotrophicus (strain ATCC 29096 / DSM 1053 / JCM 10044 / NBRC 100330 / Delta H) (Methanobacterium thermoautotrophicum).